Reading from the N-terminus, the 476-residue chain is Sulfate adenylyltransferase subunit 1 (476 aa).

The region spanning Lys-24–Lys-239 is the tr-type G domain. A G1 region spans residues Gly-33–Ser-40. Gly-33–Ser-40 is a GTP binding site. The interval Gly-91–Asp-95 is G2. The G3 stretch occupies residues Asp-112 to Gly-115. Residues Asp-112 to His-116 and Asn-167 to Asp-170 contribute to the GTP site. The interval Asn-167–Asp-170 is G4. Residues Ser-205–Leu-207 form a G5 region.

The protein belongs to the TRAFAC class translation factor GTPase superfamily. Classic translation factor GTPase family. CysN/NodQ subfamily. Heterodimer composed of CysD, the smaller subunit, and CysN.

The catalysed reaction is sulfate + ATP + H(+) = adenosine 5'-phosphosulfate + diphosphate. It functions in the pathway sulfur metabolism; hydrogen sulfide biosynthesis; sulfite from sulfate: step 1/3. Functionally, with CysD forms the ATP sulfurylase (ATPS) that catalyzes the adenylation of sulfate producing adenosine 5'-phosphosulfate (APS) and diphosphate, the first enzymatic step in sulfur assimilation pathway. APS synthesis involves the formation of a high-energy phosphoric-sulfuric acid anhydride bond driven by GTP hydrolysis by CysN coupled to ATP hydrolysis by CysD. The protein is Sulfate adenylyltransferase subunit 1 of Vibrio atlanticus (strain LGP32) (Vibrio splendidus (strain Mel32)).